The chain runs to 394 residues: 8-amino-7-oxononanoate synthase (394 aa).

Arginine 21 contacts substrate. 112-113 is a pyridoxal 5'-phosphate binding site; it reads GY. Histidine 137 serves as a coordination point for substrate. Serine 183, histidine 211, and threonine 239 together coordinate pyridoxal 5'-phosphate. At lysine 242 the chain carries N6-(pyridoxal phosphate)lysine. Residue threonine 358 participates in substrate binding.

It belongs to the class-II pyridoxal-phosphate-dependent aminotransferase family. BioF subfamily. In terms of assembly, homodimer. The cofactor is pyridoxal 5'-phosphate.

The enzyme catalyses 6-carboxyhexanoyl-[ACP] + L-alanine + H(+) = (8S)-8-amino-7-oxononanoate + holo-[ACP] + CO2. It functions in the pathway cofactor biosynthesis; biotin biosynthesis. Its function is as follows. Catalyzes the decarboxylative condensation of pimeloyl-[acyl-carrier protein] and L-alanine to produce 8-amino-7-oxononanoate (AON), [acyl-carrier protein], and carbon dioxide. In Burkholderia pseudomallei (strain K96243), this protein is 8-amino-7-oxononanoate synthase.